The following is a 190-amino-acid chain: Xanthine phosphoribosyltransferase (190 aa).

Xanthine-binding residues include L20 and N27. 128 to 132 (ANGKA) is a 5-phospho-alpha-D-ribose 1-diphosphate binding site. Residue K156 participates in xanthine binding.

Belongs to the purine/pyrimidine phosphoribosyltransferase family. Xpt subfamily. In terms of assembly, homodimer.

The protein resides in the cytoplasm. It catalyses the reaction XMP + diphosphate = xanthine + 5-phospho-alpha-D-ribose 1-diphosphate. It participates in purine metabolism; XMP biosynthesis via salvage pathway; XMP from xanthine: step 1/1. Converts the preformed base xanthine, a product of nucleic acid breakdown, to xanthosine 5'-monophosphate (XMP), so it can be reused for RNA or DNA synthesis. In Pseudomonas fluorescens (strain SBW25), this protein is Xanthine phosphoribosyltransferase.